A 397-amino-acid chain; its full sequence is Acid extracellular protease (397 aa).

Positions 1–17 are cleaved as a signal peptide; the sequence is MQFSLATLTTLLAFVAA. The Peptidase A1 domain maps to 61 to 378; sequence YQVQISLGGQ…DLERDEVSIA (318 aa). The active site involves D77. N88 is a glycosylation site (N-linked (GlcNAc...) asparagine). C93 and C100 form a disulfide bridge. Residue D264 is part of the active site. C303 and C343 are oxidised to a cystine. N310 and N314 each carry an N-linked (GlcNAc...) asparagine glycan.

The protein belongs to the peptidase A1 family.

The protein localises to the secreted. The chain is Acid extracellular protease (AXP1) from Yarrowia lipolytica (strain CLIB 122 / E 150) (Yeast).